The primary structure comprises 414 residues: Transcriptional repressor protein YY1 (414 aa).

Positions 1-170 are interaction with the SMAD1/SMAD4 complex; it reads MASGDTLYIA…SGGGASSGGG (170 aa). Positions 32–41 are enriched in low complexity; sequence PVETIETTVV. Residues 32–83 are disordered; that stretch reads PVETIETTVVGEEEEEDDDDEDGGGGDHGGGGGGHGHAGHHHHHHHHHHHHP. The span at 42 to 55 shows a compositional bias: acidic residues; sequence GEEEEEDDDDEDGG. Over residues 57 to 67 the composition is skewed to gly residues; it reads GDHGGGGGGHG. Residues 68–83 are compositionally biased toward basic residues; the sequence is HAGHHHHHHHHHHHHP. Residues 118–260 form a gly-rich region involved in interaction with HCFC1 region; it reads DDSDGLRAED…YSEYMTGKKL (143 aa). Residue Ser120 is modified to Phosphoserine. The segment at 159–203 is disordered; it reads GKSGGGASSGGGRVKKGGGKKSGKKSYLGGGAGAAGGGGADPGNK. Residues 160-170 are compositionally biased toward gly residues; sequence KSGGGASSGGG. Positions 171–182 are enriched in basic residues; it reads RVKKGGGKKSGK. Residues Lys182 and Lys183 each participate in a glycyl lysine isopeptide (Lys-Gly) (interchain with G-Cter in SUMO2) cross-link. The segment covering 186 to 199 has biased composition (gly residues); that stretch reads LGGGAGAAGGGGAD. Glycyl lysine isopeptide (Lys-Gly) (interchain with G-Cter in SUMO2) cross-links involve residues Lys208 and Lys230. Ser247 is subject to Phosphoserine. An involved in nuclear matrix association region spans residues 257–341; that stretch reads GKKLPPGGIP…KAFVESSKLK (85 aa). Glycyl lysine isopeptide (Lys-Gly) (interchain with G-Cter in SUMO2) cross-links involve residues Lys286 and Lys288. Residues 295–414 form a binding to DNA region; that stretch reads TIACPHKGCT…LTHAKAKNNQ (120 aa). C2H2-type zinc fingers lie at residues 296–320, 325–347, and 353–377; these read IACPHKGCTKMFRDNSAMRKHLHTH, HVCAECGKAFVESSKLKRHQLVH, and FQCTFEGCGKRFSLDFNLRTHVRIH. The Zn(2+) site is built by Cys298, Cys303, His316, His320, Cys327, Cys330, His343, His347, Cys355, Cys360, His373, and His377. The segment at 333–371 is involved in repression of activated transcription; sequence AFVESSKLKRHQLVHTGEKPFQCTFEGCGKRFSLDFNLR. Positions 371 to 397 are involved in masking transactivation domain; that stretch reads RTHVRIHTGDRPYVCPFDGCNKKFAQS. Thr378 bears the Phosphothreonine mark. The C2H2-type 4 zinc-finger motif lies at 383-407; the sequence is YVCPFDGCNKKFAQSTNLKSHILTH. 4 residues coordinate Zn(2+): Cys385, Cys390, His403, and His407. Glycyl lysine isopeptide (Lys-Gly) (interchain with G-Cter in SUMO2) cross-links involve residues Lys409 and Lys411.

The protein belongs to the YY transcription factor family. As to quaternary structure, interacts with YAF2 through the region encompassing the first and second zinc fingers. Component of the chromatin remodeling INO80 complex; specifically part of a complex module associated with the DBINO domain of INO80. Interacts with EED and EZH2; the interactions are indicative for an association with the PRC2/EED-EZH2 complex. Found in a complex with SMAD1 and SMAD4. Interacts with SFMBT2. Found in a complex with YY1, SIN3A and HDAC1. Accessory component of the polycomb repressive deubiquitinase (PR-DUB) complex, at least composed of BAP1, one of ASXL1, ASXL2 or (probably) ASXL3 and one of MBD5 or MBD6; the PR-DUB core associates with a number of accessory proteins, including FOXK1, FOXK2, KDM1B, HCFC1, YY1 and OGT. Interacts (via Gly-rich region) with HCFC1; the interaction is direct. Interacts (via C-terminal zinc-finger domains) with BAP1 (via ULD domain); the interaction is direct and requires HCFC1. In terms of processing, transiently poly-ADP-ribosylated by PARP1 upon DNA damage, with the effect of decreasing affinity of YY1 to its cognate DNA binding sites. Post-translationally, ubiquitinated. Phosphorylation at Ser-120 by CK2 prevents proteolytic cleavage by caspase-7 (CASP7) during apoptosis. In terms of processing, proteolytically cleaved by caspase-7 (CASP7) in response to apoptosis. Phosphorylation at Ser-120 protects against proteolytic cleavage. Expressed in ovary and, at lower levels, in testis.

The protein localises to the nucleus. Its subcellular location is the nucleus matrix. The protein resides in the cytoplasm. In terms of biological role, multifunctional transcription factor that exhibits positive and negative control on a large number of cellular and viral genes by binding to sites overlapping the transcription start site. Binds to the consensus sequence 5'-CCGCCATNTT-3'; some genes have been shown to contain a longer binding motif allowing enhanced binding; the initial CG dinucleotide can be methylated greatly reducing the binding affinity. The effect on transcription regulation is depending upon the context in which it binds and diverse mechanisms of action include direct activation or repression, indirect activation or repression via cofactor recruitment, or activation or repression by disruption of binding sites or conformational DNA changes. Its activity is regulated by transcription factors and cytoplasmic proteins that have been shown to abrogate or completely inhibit YY1-mediated activation or repression. Binds to the upstream conserved region (UCR) (5'-CGCCATTTT-3') of Moloney murine leukemia virus (MuLV). Acts synergistically with the SMAD1 and SMAD4 in bone morphogenetic protein (BMP)-mediated cardiac-specific gene expression. Binds to SMAD binding elements (SBEs) (5'-GTCT/AGAC-3') within BMP response element (BMPRE) of cardiac activating regions. Proposed to recruit the PRC2/EED-EZH2 complex to target genes that are transcriptional repressed. Involved in DNA repair. In vitro, binds to DNA recombination intermediate structures (Holliday junctions). Involved in spermatogenesis and may play a role in meiotic DNA double-strand break repair. Plays a role in regulating enhancer activation. Recruits the PR-DUB complex to specific gene-regulatory regions. Proposed core component of the chromatin remodeling INO80 complex which is involved in transcriptional regulation, DNA replication and probably DNA repair; proposed to target the INO80 complex to YY1-responsive elements. The protein is Transcriptional repressor protein YY1 (Yy1) of Mus musculus (Mouse).